The primary structure comprises 376 residues: MHYAMEQRCLYDYNLSELTELLQSWGEPAFRARQLYRHLYVNLARQVDQMTDLPLALRSRLAEIPFSTLRCEQVQIGDNGMTRKALFRLPDGAVVETVLMVYPDRSTVCVSTQAGCGMGCVFCATGQLGLLRNLSSGEIVAQAIWASQELRAMGMAGPTGRVSNLVFMGMGEPFANYDRWWQAVERLHDPQGFNLGARSMTVSTVGLVKGIERLANERLPINLAISLHAPDDALRSELMPVNRRYPIADLMAATRNYIAKTRRRVSFEYVLLQGKNDHPHQAIALARLLRHSAPRGPLLFHVNLIPWNPVPGTPLGRSEWERVTTFQQILTDYGIPCTVRVERGVEIAAACGQLAGRHSVPLNTVEQEIPARNVTG.

The Proton acceptor role is filled by Glu96. The Radical SAM core domain occupies 102–346; that stretch reads YPDRSTVCVS…CTVRVERGVE (245 aa). Residues Cys109 and Cys351 are joined by a disulfide bond. Cys116, Cys120, and Cys123 together coordinate [4Fe-4S] cluster. Residues 171–172, Ser203, 226–228, and Asn308 each bind S-adenosyl-L-methionine; these read GE and SLH. Catalysis depends on Cys351, which acts as the S-methylcysteine intermediate.

The protein belongs to the radical SAM superfamily. RlmN family. It depends on [4Fe-4S] cluster as a cofactor.

It localises to the cytoplasm. The catalysed reaction is adenosine(2503) in 23S rRNA + 2 reduced [2Fe-2S]-[ferredoxin] + 2 S-adenosyl-L-methionine = 2-methyladenosine(2503) in 23S rRNA + 5'-deoxyadenosine + L-methionine + 2 oxidized [2Fe-2S]-[ferredoxin] + S-adenosyl-L-homocysteine. The enzyme catalyses adenosine(37) in tRNA + 2 reduced [2Fe-2S]-[ferredoxin] + 2 S-adenosyl-L-methionine = 2-methyladenosine(37) in tRNA + 5'-deoxyadenosine + L-methionine + 2 oxidized [2Fe-2S]-[ferredoxin] + S-adenosyl-L-homocysteine. Its function is as follows. Specifically methylates position 2 of adenine 2503 in 23S rRNA and position 2 of adenine 37 in tRNAs. The protein is Probable dual-specificity RNA methyltransferase RlmN of Chloroflexus aurantiacus (strain ATCC 29366 / DSM 635 / J-10-fl).